Reading from the N-terminus, the 149-residue chain is Large ribosomal subunit protein bL9 (149 aa).

Belongs to the bacterial ribosomal protein bL9 family.

Binds to the 23S rRNA. This is Large ribosomal subunit protein bL9 from Dichelobacter nodosus (strain VCS1703A).